A 228-amino-acid polypeptide reads, in one-letter code: Cytidylate kinase (228 aa).

17–25 (GPSASGKGT) is an ATP binding site.

The protein belongs to the cytidylate kinase family. Type 1 subfamily.

The protein localises to the cytoplasm. It catalyses the reaction CMP + ATP = CDP + ADP. The enzyme catalyses dCMP + ATP = dCDP + ADP. In Paraburkholderia xenovorans (strain LB400), this protein is Cytidylate kinase.